We begin with the raw amino-acid sequence, 226 residues long: ATP-dependent dethiobiotin synthetase BioD (226 aa).

Residue 14–19 participates in ATP binding; that stretch reads GIGKTF. A Mg(2+)-binding site is contributed by threonine 18. Residue lysine 39 is part of the active site. Serine 43 lines the substrate pocket. Residues aspartate 56, 117–120, 177–178, 206–208, and asparagine 213 contribute to the ATP site; these read EGVG, NT, and PHI. Residues aspartate 56 and glutamate 117 each contribute to the Mg(2+) site.

This sequence belongs to the dethiobiotin synthetase family. In terms of assembly, homodimer. It depends on Mg(2+) as a cofactor.

It is found in the cytoplasm. The catalysed reaction is (7R,8S)-7,8-diammoniononanoate + CO2 + ATP = (4R,5S)-dethiobiotin + ADP + phosphate + 3 H(+). The protein operates within cofactor biosynthesis; biotin biosynthesis; biotin from 7,8-diaminononanoate: step 1/2. Functionally, catalyzes a mechanistically unusual reaction, the ATP-dependent insertion of CO2 between the N7 and N8 nitrogen atoms of 7,8-diaminopelargonic acid (DAPA, also called 7,8-diammoniononanoate) to form a ureido ring. In Xylella fastidiosa (strain Temecula1 / ATCC 700964), this protein is ATP-dependent dethiobiotin synthetase BioD.